The chain runs to 24 residues: Probable caffeoyl-CoA O-methyltransferase (24 aa).

It belongs to the class I-like SAM-binding methyltransferase superfamily. Cation-dependent O-methyltransferase family. CCoAMT subfamily. Requires a divalent metal cation as cofactor.

The enzyme catalyses (E)-caffeoyl-CoA + S-adenosyl-L-methionine = (E)-feruloyl-CoA + S-adenosyl-L-homocysteine + H(+). It functions in the pathway aromatic compound metabolism; phenylpropanoid biosynthesis. In terms of biological role, methylates caffeoyl-CoA to feruloyl-CoA and 5-hydroxyferuloyl-CoA to sinapoyl-CoA. Plays a role in the synthesis of feruloylated polysaccharides. Involved in the reinforcement of the plant cell wall. Also involved in the responding to wounding or pathogen challenge by the increased formation of cell wall-bound ferulic acid polymers. This Pinus pinaster (Maritime pine) protein is Probable caffeoyl-CoA O-methyltransferase.